Consider the following 80-residue polypeptide: Small ribosomal subunit protein bS18 (80 aa).

Belongs to the bacterial ribosomal protein bS18 family. In terms of assembly, part of the 30S ribosomal subunit. Forms a tight heterodimer with protein bS6.

Functionally, binds as a heterodimer with protein bS6 to the central domain of the 16S rRNA, where it helps stabilize the platform of the 30S subunit. The sequence is that of Small ribosomal subunit protein bS18 from Beijerinckia indica subsp. indica (strain ATCC 9039 / DSM 1715 / NCIMB 8712).